The following is a 238-amino-acid chain: 3-deoxy-D-manno-octulosonic acid kinase (238 aa).

Aspartate 167 is a catalytic residue.

The protein belongs to the protein kinase superfamily. KdkA/RfaP family.

The protein resides in the cell inner membrane. The catalysed reaction is an alpha-Kdo-(2-&gt;6)-lipid IVA + ATP = a 4-O-phospho-alpha-Kdo-(2-&gt;6)-lipid IVA + ADP + H(+). The protein operates within bacterial outer membrane biogenesis; LPS core biosynthesis. In terms of biological role, catalyzes the ATP-dependent phosphorylation of the 3-deoxy-D-manno-octulosonic acid (Kdo) residue in Kdo-lipid IV(A) at the 4-OH position. The sequence is that of 3-deoxy-D-manno-octulosonic acid kinase from Vibrio parahaemolyticus serotype O3:K6 (strain RIMD 2210633).